The chain runs to 301 residues: Porphobilinogen deaminase (301 aa).

An S-(dipyrrolylmethanemethyl)cysteine modification is found at cysteine 235.

This sequence belongs to the HMBS family. In terms of assembly, monomer. The cofactor is dipyrromethane.

The enzyme catalyses 4 porphobilinogen + H2O = hydroxymethylbilane + 4 NH4(+). Its pathway is porphyrin-containing compound metabolism; protoporphyrin-IX biosynthesis; coproporphyrinogen-III from 5-aminolevulinate: step 2/4. Tetrapolymerization of the monopyrrole PBG into the hydroxymethylbilane pre-uroporphyrinogen in several discrete steps. The sequence is that of Porphobilinogen deaminase from Thermus thermophilus (strain ATCC BAA-163 / DSM 7039 / HB27).